We begin with the raw amino-acid sequence, 486 residues long: Aspartyl/glutamyl-tRNA(Asn/Gln) amidotransferase subunit B (486 aa).

The protein belongs to the GatB/GatE family. GatB subfamily. In terms of assembly, heterotrimer of A, B and C subunits.

The catalysed reaction is L-glutamyl-tRNA(Gln) + L-glutamine + ATP + H2O = L-glutaminyl-tRNA(Gln) + L-glutamate + ADP + phosphate + H(+). It carries out the reaction L-aspartyl-tRNA(Asn) + L-glutamine + ATP + H2O = L-asparaginyl-tRNA(Asn) + L-glutamate + ADP + phosphate + 2 H(+). In terms of biological role, allows the formation of correctly charged Asn-tRNA(Asn) or Gln-tRNA(Gln) through the transamidation of misacylated Asp-tRNA(Asn) or Glu-tRNA(Gln) in organisms which lack either or both of asparaginyl-tRNA or glutaminyl-tRNA synthetases. The reaction takes place in the presence of glutamine and ATP through an activated phospho-Asp-tRNA(Asn) or phospho-Glu-tRNA(Gln). This chain is Aspartyl/glutamyl-tRNA(Asn/Gln) amidotransferase subunit B, found in Leptospira borgpetersenii serovar Hardjo-bovis (strain L550).